The following is a 219-amino-acid chain: Orotate phosphoribosyltransferase (219 aa).

K26 serves as a coordination point for 5-phospho-alpha-D-ribose 1-diphosphate. Orotate is bound at residue 34–35 (FF). Residues 72–73 (YK), R98, K99, K102, H104, and 124–132 (DDVITAGTA) each bind 5-phospho-alpha-D-ribose 1-diphosphate. Positions 128 and 156 each coordinate orotate.

Belongs to the purine/pyrimidine phosphoribosyltransferase family. PyrE subfamily. In terms of assembly, homodimer. Mg(2+) is required as a cofactor.

The catalysed reaction is orotidine 5'-phosphate + diphosphate = orotate + 5-phospho-alpha-D-ribose 1-diphosphate. It functions in the pathway pyrimidine metabolism; UMP biosynthesis via de novo pathway; UMP from orotate: step 1/2. Functionally, catalyzes the transfer of a ribosyl phosphate group from 5-phosphoribose 1-diphosphate to orotate, leading to the formation of orotidine monophosphate (OMP). This Xylella fastidiosa (strain Temecula1 / ATCC 700964) protein is Orotate phosphoribosyltransferase.